Here is a 281-residue protein sequence, read N- to C-terminus: N-acetylmuramic acid 6-phosphate etherase (281 aa).

An SIS domain is found at 63-226 (IVPRMKQGGR…TTSVMIQLGR (164 aa)). The active-site Proton donor is the glutamate 91. The active site involves glutamate 122.

It belongs to the GCKR-like family. MurNAc-6-P etherase subfamily. As to quaternary structure, homodimer.

The enzyme catalyses N-acetyl-D-muramate 6-phosphate + H2O = N-acetyl-D-glucosamine 6-phosphate + (R)-lactate. It functions in the pathway amino-sugar metabolism; N-acetylmuramate degradation. In terms of biological role, specifically catalyzes the cleavage of the D-lactyl ether substituent of MurNAc 6-phosphate, producing GlcNAc 6-phosphate and D-lactate. This is N-acetylmuramic acid 6-phosphate etherase from Bacteroides fragilis (strain YCH46).